The chain runs to 136 residues: Large ribosomal subunit protein uL16 (136 aa).

This sequence belongs to the universal ribosomal protein uL16 family. In terms of assembly, part of the 50S ribosomal subunit.

Functionally, binds 23S rRNA and is also seen to make contacts with the A and possibly P site tRNAs. The protein is Large ribosomal subunit protein uL16 of Rickettsia africae (strain ESF-5).